The following is a 268-amino-acid chain: Tryptophan synthase alpha chain (268 aa).

Active-site proton acceptor residues include E49 and D60.

This sequence belongs to the TrpA family. As to quaternary structure, tetramer of two alpha and two beta chains.

The enzyme catalyses (1S,2R)-1-C-(indol-3-yl)glycerol 3-phosphate + L-serine = D-glyceraldehyde 3-phosphate + L-tryptophan + H2O. It participates in amino-acid biosynthesis; L-tryptophan biosynthesis; L-tryptophan from chorismate: step 5/5. In terms of biological role, the alpha subunit is responsible for the aldol cleavage of indoleglycerol phosphate to indole and glyceraldehyde 3-phosphate. In Xanthomonas euvesicatoria pv. vesicatoria (strain 85-10) (Xanthomonas campestris pv. vesicatoria), this protein is Tryptophan synthase alpha chain.